The chain runs to 4911 residues: Histone-lysine N-methyltransferase 2C (4911 aa).

A disordered region spans residues 1-101; that stretch reads MSSEEDKSVE…EDAEAEVDNS (101 aa). The span at 12–28 shows a compositional bias: pro residues; that stretch reads PQPPPPPPEEPGAPAPS. Residues serine 28 and serine 46 each carry the phosphoserine modification. The segment at residues 34–46 is a DNA-binding region (a.T hook); sequence KRPRGRPRKDGAS. The span at 50–59 shows a compositional bias: basic residues; the sequence is RARKKPRSRG. Acidic residues predominate over residues 64–81; it reads EDEDSMDGLETTETETIV. A Phosphoserine modification is found at serine 89. Residues 92 to 112 are a coiled coil; sequence EDAEAEVDNSKQLIPTLQRSV. Residue serine 113 is modified to Phosphoserine. Positions 164–203 are disordered; it reads RNQPSNKKDIDDNSNGTYEKMQNSAPRKQRGQRKERSPQQ. Residues 176–189 show a composition bias toward polar residues; the sequence is NSNGTYEKMQNSAP. Phosphoserine is present on serine 200. Residues 227–262 form a C2HC pre-PHD-type 1; degenerate zinc finger; the sequence is ELSLVGLPDAIDIQALFDSTGTCWAHHRCVEWSLGV. PHD-type zinc fingers lie at residues 283–331, 341–391, 388–438, and 464–520; these read ERCA…PEHI, DANC…CKVC, CKVC…CRIC, and DNLC…CKHL. Residues 344 to 389 form an RING-type zinc finger; the sequence is CAVCDSPGDLLDQFFCTTCGQHYHGMCLDIAVTPLKRAGWQCPECK. Residues 436-489 form the DHHC domain; that stretch reads RICIECGTRSSSQWHHNCLICDNCYQQQDNLCPFCGKCYHPELQKDMLHCNMCK. Residues 644–672 adopt a coiled-coil conformation; the sequence is EDKMEVTENIEVVTHQITVQQEQLQLLEE. The span at 721 to 730 shows a compositional bias: basic and acidic residues; that stretch reads QGEKEQKENS. A disordered region spans residues 721-742; it reads QGEKEQKENSELSTGLMDSEMT. Lysine 758 is subject to N6-acetyllysine. Residues 763-791 show a composition bias toward low complexity; it reads SSETESSFSSSADISKADVSSSPTPSSDL. Disordered stretches follow at residues 763–798, 828–864, and 885–912; these read SSET…DMLH, PAIT…DISE, and GRGS…RSKL. Basic residues predominate over residues 830–842; it reads ITKRKFSPGRPRS. Polar residues predominate over residues 845–856; sequence GAWSTHNTVSPP. A Phosphoserine modification is found at serine 854. 3 consecutive PHD-type zinc fingers follow at residues 957–1010, 1007–1057, and 1084–1139; these read QDMC…CTVC, CTVC…CVWC, and LSSC…CRPY. Residues 1215–1324 are disordered; that stretch reads AVLQTPPDIQ…LPCRDDGWSE (110 aa). A compositionally biased stretch (basic and acidic residues) spans 1224-1270; it reads QSEHSRDGEMDDSREGELMDCDGKSESSPEREAVDDETKGVEGTDGV. Serine 1301 is modified (phosphoserine). Positions 1338–1366 form a coiled coil; sequence TESTEKIKKRYRKRKNKLEETFPAYLQEA. Residues 1406 to 1416 are compositionally biased toward low complexity; sequence PSLDPLLSSSS. Disordered regions lie at residues 1406 to 1431 and 1458 to 1485; these read PSLD…DDPL and HSDI…PLSE. The segment covering 1467–1482 has biased composition (polar residues); that stretch reads DPSSLPQPNVNQSSRP. At lysine 1508 the chain carries N6-acetyllysine. 2 disordered regions span residues 1604–1630 and 1709–2448; these read FNPM…DTMS and VQMS…SPVA. 2 stretches are compositionally biased toward polar residues: residues 1610 to 1620 and 1709 to 1727; these read DPNNSWTSSAP and VQMS…SIDP. Positions 1729 to 1753 are enriched in basic and acidic residues; sequence SRIDSELFKDPLKQRESEHEQEWKF. A coiled-coil region spans residues 1754 to 1787; sequence RQQMRQKSKQQAKIEATQKLEQVKNEQQQQQQQQ. Lysine 1772 is subject to N6-acetyllysine. The span at 1788 to 1823 shows a compositional bias: polar residues; that stretch reads FGSQHLLVQSGSDTPSSGIQSPLTPQPGNGNMSPAQ. The span at 1851-1860 shows a compositional bias: pro residues; sequence QAPPPPPAPS. Positions 1861 to 1875 are enriched in low complexity; it reads RIPIQDSLSQAQTSQ. The span at 1927–1945 shows a compositional bias: polar residues; it reads TPLSSVSRPLQMNETTANR. Position 1987 is a phosphoserine (serine 1987). Lysine 2009 bears the N6-acetyllysine mark. 4 stretches are compositionally biased toward polar residues: residues 2054–2065, 2085–2094, 2115–2131, and 2144–2159; these read QDPYGSVSQASR, FSHNQSNDPY, AFSQ…QDPY, and SYSQ…TDPY. Residues 2173–2187 show a composition bias toward low complexity; the sequence is PYSQQPQTPRPSTQT. Polar residues-rich tracts occupy residues 2302–2319, 2335–2353, and 2362–2375; these read SPMT…SQTA, CASS…SGVS, and SGVT…NMAQ. Residues 2377-2389 show a composition bias toward basic and acidic residues; the sequence is DTEKLRQRQKLRE. The segment covering 2390–2399 has biased composition (low complexity); that stretch reads IILQQQQQKK. Asymmetric dimethylarginine is present on residues arginine 2454 and arginine 2571. 4 disordered regions span residues 2589–2694, 2793–2887, 2925–2954, and 2989–3029; these read RHGN…SDDP, EPKK…RETA, EKSD…VSSL, and VNPG…SGPQ. 2 stretches are compositionally biased toward polar residues: residues 2629 to 2645 and 2661 to 2682; these read PPSQ…SSMV and PLST…TQPS. The segment covering 2793–2811 has biased composition (basic and acidic residues); that stretch reads EPKKKEQENKTLVLSDKHS. An N6-acetyllysine mark is found at lysine 2802 and lysine 2809. The span at 2814-2832 shows a compositional bias: polar residues; sequence KKSTVTNEVKTEVLSPNSK. A Phosphoserine modification is found at serine 2828. Lysine 2832 is subject to N6-acetyllysine. A compositionally biased stretch (basic and acidic residues) spans 2833-2849; the sequence is VESKCETEKNDENKDNV. Residues 2851–2860 are compositionally biased toward polar residues; sequence TPCSQASAHS. Residues 2861–2884 show a composition bias toward basic and acidic residues; that stretch reads DLNDGEKTSLHPCDPDLFEKRTNR. Residue lysine 2867 is modified to N6-acetyllysine. Residues 3011–3029 show a composition bias toward low complexity; it reads TQTGPQTSQSGTSSMSGPQ. 3 coiled-coil regions span residues 3054-3081, 3173-3272, and 3391-3433; these read LLQD…QRSE, NDSQ…QQQQ, and FSES…EMEQ. Over residues 3205–3221 the composition is skewed to basic residues; the sequence is HRKSKKALSAKQRTAKK. Disordered stretches follow at residues 3205 to 3241, 3353 to 3409, 3527 to 3583, 3596 to 3919, and 4024 to 4053; these read HRKS…TEQQ, PPIA…EQQE, PNFS…HSYP, IIPE…MANG, and VKEE…SRRN. 2 stretches are compositionally biased toward basic and acidic residues: residues 3222 to 3238 and 3395 to 3409; these read AGRE…KHVT and FQER…EQQE. 4 stretches are compositionally biased toward polar residues: residues 3527–3549, 3564–3583, 3637–3658, and 3684–3701; these read PNFS…QSPV, ANSS…HSYP, ISET…QADQ, and LPNS…TYAN. A compositionally biased stretch (basic and acidic residues) spans 3703–3725; it reads EVDKLSMETPAKTEEIKLEKAET. Lysine 3714 is subject to N6-acetyllysine. The residue at position 3758 (serine 3758) is a Phosphoserine. A compositionally biased stretch (basic and acidic residues) spans 3803-3812; the sequence is DCTKDNKLVE. Residues 3878 to 3892 are compositionally biased toward polar residues; the sequence is MYSSTDTFTHLKQQN. The segment covering 3897-3911 has biased composition (pro residues); it reads PPTPPASLPPTPPPM. At serine 4034 the chain carries Phosphoserine. An Asymmetric dimethylarginine modification is found at arginine 4139. Serine 4267 is modified (phosphoserine). The C2HC pre-PHD-type 2 zinc-finger motif lies at 4399-4439; it reads YRKCCFCHEEGDGLTDGPARLLNLDLDLWVHLNCALWSTEV. The PHD-type 8 zinc finger occupies 4460 to 4507; that stretch reads MKCVFCHKTGATSGCHRFRCTNIYHFTCAIKAQCMFFKDKTMLCPMHK. Positions 4545 to 4605 constitute an FYR N-terminal domain; that stretch reads DHTFRVGSLI…CRYLCSIEEK (61 aa). Residues 4606 to 4691 enclose the FYR C-terminal domain; the sequence is DGRPVFVIRI…EACENYTFRY (86 aa). Positions 4707-4712 match the WDR5 interaction motif (WIN) motif; sequence GCARSE. The SET domain maps to 4771 to 4887; sequence SNVYLARSRI…KGEELCYDYK (117 aa). S-adenosyl-L-methionine-binding positions include tyrosine 4825 and 4848 to 4849; that span reads NH. Positions 4851, 4899, 4901, and 4906 each coordinate Zn(2+). The Post-SET domain occupies 4895 to 4911; it reads HKIPCHCGAVNCRKWMN.

The protein belongs to the class V-like SAM-binding methyltransferase superfamily. Histone-lysine methyltransferase family. TRX/MLL subfamily. Component of the MLL3 complex (also named ASCOM complex), at least composed of catalytic subunit KMT2C/MLL3, ASH2L, RBBP5, WDR5, NCOA6, DPY30, KDM6A, PAXIP1/PTIP, PAGR1 and alpha- and beta-tubulin. Forms a core complex with the evolutionary conserved subcomplex WRAD composed of WDR5, RBBP5, ASH2L/ASH2 and DPY30 subunits; WRAD differentially stimulates the methyltransferase activity. Interacts (via WIN motif) with WDR5. Highly expressed in testis and ovary, followed by brain and liver. Also expressed in placenta, peripherical blood, fetal thymus, heart, lung and kidney. Within brain, expression was highest in hippocampus, caudate nucleus, and substantia nigra. Not detected in skeletal muscle and fetal liver.

The protein resides in the nucleus. It carries out the reaction L-lysyl(4)-[histone H3] + S-adenosyl-L-methionine = N(6)-methyl-L-lysyl(4)-[histone H3] + S-adenosyl-L-homocysteine + H(+). Its function is as follows. Histone methyltransferase that catalyzes methyl group transfer from S-adenosyl-L-methionine to the epsilon-amino group of 'Lys-4' of histone H3 (H3K4). Part of chromatin remodeling machinery predominantly forms H3K4me1 methylation marks at active chromatin sites where transcription and DNA repair take place. Likely plays a redundant role with KMT2D in enriching H3K4me1 mark on primed and active enhancer elements. In Homo sapiens (Human), this protein is Histone-lysine N-methyltransferase 2C (KMT2C).